The chain runs to 179 residues: Large ribosomal subunit protein uL5 (179 aa).

This sequence belongs to the universal ribosomal protein uL5 family. Part of the 50S ribosomal subunit; part of the 5S rRNA/L5/L18/L25 subcomplex. Contacts the 5S rRNA and the P site tRNA. Forms a bridge to the 30S subunit in the 70S ribosome.

Its function is as follows. This is one of the proteins that bind and probably mediate the attachment of the 5S RNA into the large ribosomal subunit, where it forms part of the central protuberance. In the 70S ribosome it contacts protein S13 of the 30S subunit (bridge B1b), connecting the 2 subunits; this bridge is implicated in subunit movement. Contacts the P site tRNA; the 5S rRNA and some of its associated proteins might help stabilize positioning of ribosome-bound tRNAs. In Vesicomyosocius okutanii subsp. Calyptogena okutanii (strain HA), this protein is Large ribosomal subunit protein uL5.